The chain runs to 253 residues: Probable proteasome subunit alpha type-7 (253 aa).

Phosphoserine is present on Ser104.

This sequence belongs to the peptidase T1A family. The 26S proteasome consists of a 20S proteasome core and two 19S regulatory subunits. The 20S proteasome core is composed of 28 subunits that are arranged in four stacked rings, resulting in a barrel-shaped structure. The two end rings are each formed by seven alpha subunits, and the two central rings are each formed by seven beta subunits. The catalytic chamber with the active sites is on the inside of the barrel.

The protein localises to the cytoplasm. It is found in the nucleus. Functionally, the proteasome is a multicatalytic proteinase complex which is characterized by its ability to cleave peptides with Arg, Phe, Tyr, Leu, and Glu adjacent to the leaving group at neutral or slightly basic pH. The proteasome has an ATP-dependent proteolytic activity. The chain is Probable proteasome subunit alpha type-7 (pre10) from Schizosaccharomyces pombe (strain 972 / ATCC 24843) (Fission yeast).